The chain runs to 363 residues: Adenosine deaminase (363 aa).

Zn(2+)-binding residues include H42 and H44. A purine D-ribonucleoside is bound by residues H44–D46, D172, and G201. Positions I170–A184 are gating helix loop; regulates binding affinity for substrates and thus substrate selectivity. A Zn(2+)-binding site is contributed by H226. Positions 229, 253, and 310 each coordinate a purine D-ribonucleoside. D310 is a binding site for Zn(2+).

The protein belongs to the metallo-dependent hydrolases superfamily. Adenosine and AMP deaminases family. Zn(2+) is required as a cofactor.

The catalysed reaction is adenosine + H2O + H(+) = inosine + NH4(+). It catalyses the reaction S-methyl-5'-thioadenosine + H2O + H(+) = S-methyl-5'-thioinosine + NH4(+). Its pathway is purine metabolism; purine nucleoside salvage. With respect to regulation, inhibited by coformycin and methylthiocoformycin (MT-coformycin). Functionally, catalyzes the hydrolytic deamination of adenosine to produce inosine. Unlike mammalian adenosine deaminases, also catalyzes the deamination of 5'-methylthioadenosine (MTA), a by-product of polyamine biosynthesis, to produce 5'-methylthioinosine (MTI). Plays an essential role in the purine salvage pathway which allows the parasite to use host cell purines for the synthesis of nucleic acids. The polypeptide is Adenosine deaminase (Plasmodium cynomolgi (strain B)).